The chain runs to 1095 residues: 1-phosphatidylinositol 4,5-bisphosphate phosphodiesterase (1095 aa).

A PI-PLC X-box domain is found at 319-469; it reads MEMDQPLAHY…LKRKILIKNK (151 aa). Residues H334 and H381 contribute to the active site. The substrate site is built by K467 and K469. The tract at residues 487–529 is disordered; the sequence is ELKTDDDPEEDASAGKPPEAAAAPAPAPEAAAAAEGAAEGGGG. Positions 500 to 523 are enriched in low complexity; sequence AGKPPEAAAAPAPAPEAAAAAEGA. The 117-residue stretch at 550–666 folds into the PI-PLC Y-box domain; sequence LSSMVNYAQP…GYLLKPDFMR (117 aa). S579 and R606 together coordinate substrate. The 129-residue stretch at 666–794 folds into the C2 domain; the sequence is RRADKDFDPF…SLRTEANFPM (129 aa). Disordered stretches follow at residues 842–863 and 1000–1030; these read IEEQ…EKKE and QAKM…LREK. 2 stretches are compositionally biased toward basic and acidic residues: residues 852–863 and 1007–1030; these read DAGKAKEEEKKE and TAKE…LREK.

In terms of assembly, interacts with inaD. In terms of tissue distribution, abundantly expressed in the adult retina.

It carries out the reaction a 1,2-diacyl-sn-glycero-3-phospho-(1D-myo-inositol-4,5-bisphosphate) + H2O = 1D-myo-inositol 1,4,5-trisphosphate + a 1,2-diacyl-sn-glycerol + H(+). Functionally, the production of the second messenger molecules diacylglycerol (DAG) and inositol 1,4,5-trisphosphate (IP3) is mediated by activated phosphatidylinositol-specific phospholipase C enzymes. Essential component of the phototransduction pathway. Essential downstream component of a hh-signaling pathway which regulates the Duox-dependent gut immune response to bacterial uracil; required for the activation of Cad99C and consequently Cad99C-dependent endosome formation, which is essential for the Duox-dependent production of reactive oxygen species (ROS) in response to intestinal bacterial infection. The protein is 1-phosphatidylinositol 4,5-bisphosphate phosphodiesterase of Drosophila melanogaster (Fruit fly).